Reading from the N-terminus, the 105-residue chain is Host transcription reprogramming factor 7 (105 aa).

Residues 1–19 (MKTKTIFQLVALFAIGATA) form the signal peptide. The C2H2-type zinc finger occupies 69 to 95 (YWCRIGNCNAAFKSLAARCRHEKTAVH).

Its subcellular location is the secreted. The protein resides in the host nucleus. Its function is as follows. Probable secreted effector that translocates into the nuclei of host cells to reprogram the expression of targeted genes by binding on effector binding elements in rice. The sequence is that of Host transcription reprogramming factor 7 from Pyricularia oryzae (strain 70-15 / ATCC MYA-4617 / FGSC 8958) (Rice blast fungus).